A 439-amino-acid polypeptide reads, in one-letter code: Methylenetetrahydrofolate--tRNA-(uracil-5-)-methyltransferase TrmFO (439 aa).

8-13 (GGGLAG) lines the FAD pocket.

This sequence belongs to the MnmG family. TrmFO subfamily. FAD is required as a cofactor.

Its subcellular location is the cytoplasm. The catalysed reaction is uridine(54) in tRNA + (6R)-5,10-methylene-5,6,7,8-tetrahydrofolate + NADH + H(+) = 5-methyluridine(54) in tRNA + (6S)-5,6,7,8-tetrahydrofolate + NAD(+). It carries out the reaction uridine(54) in tRNA + (6R)-5,10-methylene-5,6,7,8-tetrahydrofolate + NADPH + H(+) = 5-methyluridine(54) in tRNA + (6S)-5,6,7,8-tetrahydrofolate + NADP(+). Functionally, catalyzes the folate-dependent formation of 5-methyl-uridine at position 54 (M-5-U54) in all tRNAs. The protein is Methylenetetrahydrofolate--tRNA-(uracil-5-)-methyltransferase TrmFO of Dictyoglomus thermophilum (strain ATCC 35947 / DSM 3960 / H-6-12).